We begin with the raw amino-acid sequence, 802 residues long: Phenylalanine--tRNA ligase beta subunit (802 aa).

The tRNA-binding domain maps to 38-149 (KSSLKPFVIA…ADAPVGTSFA (112 aa)). Residues 399–474 (HKPKIVSFPI…RIHGVDNIAP (76 aa)) enclose the B5 domain. Mg(2+) is bound by residues Asp452, Asp458, Glu461, and Glu462. Residues 708-801 (SAFQAVKRDF…VGKQTGGVLR (94 aa)) form the FDX-ACB domain.

The protein belongs to the phenylalanyl-tRNA synthetase beta subunit family. Type 1 subfamily. Tetramer of two alpha and two beta subunits. Requires Mg(2+) as cofactor.

Its subcellular location is the cytoplasm. It carries out the reaction tRNA(Phe) + L-phenylalanine + ATP = L-phenylalanyl-tRNA(Phe) + AMP + diphosphate + H(+). The protein is Phenylalanine--tRNA ligase beta subunit of Mesorhizobium japonicum (strain LMG 29417 / CECT 9101 / MAFF 303099) (Mesorhizobium loti (strain MAFF 303099)).